A 405-amino-acid chain; its full sequence is 8-amino-7-oxononanoate synthase 1 (405 aa).

Arg29 provides a ligand contact to substrate. Position 116–117 (116–117 (GY)) interacts with pyridoxal 5'-phosphate. His141 lines the substrate pocket. Pyridoxal 5'-phosphate contacts are provided by Ser187, His215, and Thr247. Lys250 carries the post-translational modification N6-(pyridoxal phosphate)lysine. Substrate is bound at residue Thr368.

This sequence belongs to the class-II pyridoxal-phosphate-dependent aminotransferase family. BioF subfamily. Homodimer. Requires pyridoxal 5'-phosphate as cofactor.

It catalyses the reaction 6-carboxyhexanoyl-[ACP] + L-alanine + H(+) = (8S)-8-amino-7-oxononanoate + holo-[ACP] + CO2. It functions in the pathway cofactor biosynthesis; biotin biosynthesis. In terms of biological role, catalyzes the decarboxylative condensation of pimeloyl-[acyl-carrier protein] and L-alanine to produce 8-amino-7-oxononanoate (AON), [acyl-carrier protein], and carbon dioxide. This Polaromonas sp. (strain JS666 / ATCC BAA-500) protein is 8-amino-7-oxononanoate synthase 1.